The chain runs to 166 residues: Glycine cleavage system H protein 3, mitochondrial (166 aa).

A mitochondrion-targeting transit peptide spans 1–35; that stretch reads MALRMWASSTANALKLSSSASKSHLLPAFSISRCF. Positions 57–139 constitute a Lipoyl-binding domain; that stretch reads VATIGITDHA…YEDGWMIKVK (83 aa). Lysine 98 carries the post-translational modification N6-lipoyllysine. Serine 141 carries the post-translational modification Phosphoserine.

It belongs to the GcvH family. As to quaternary structure, the glycine cleavage system is composed of four proteins: P, T, L and H. (R)-lipoate is required as a cofactor. In terms of processing, S-nitrosylated and/or glutathionylated at unknown positions in response to nitric oxide.

Its subcellular location is the mitochondrion. With respect to regulation, inhibited by harpin, S-nitrosoglutathione (GSNO), nitric oxide, N-ethylmaleimide and 5,5'-dithiobis-(2-nitrobenzoic acid). Its function is as follows. The glycine decarboxylase (GDC) or glycine cleavage system catalyzes the degradation of glycine. The H protein shuttles the methylamine group of glycine from the P protein to the T protein. The sequence is that of Glycine cleavage system H protein 3, mitochondrial (GDH3) from Arabidopsis thaliana (Mouse-ear cress).